The primary structure comprises 302 residues: MADRRVLFVHAHPDDESIETGATIARYAAEGAHVTLVTCTLGEEGEIIPPELAHHAADRDDTLGRYRIGELAAACAALGVTDHRFLGGVGRWRDSGMMGAPSNLRPDCFWQADLDEAAAELVKVIREVRPQVLVTYDENGTYGHPDHIKAHRVSWRAYELAADPAFPGGEPWRIAKVYHTAQPRSVLRRGVEAMRGADMPFTRVASVDELPFGCDDAQVTTEIDARAHLPAKFAALRAHATQVMVHEPWFALSNGIGREVLGVEFFTLKAGTPGPRVAGVPAGEGGLGGPRLLETDLFAGIG.

The Zn(2+) site is built by His12, Asp15, and His147.

The protein belongs to the MshB deacetylase family. It depends on Zn(2+) as a cofactor.

It carries out the reaction 1D-myo-inositol 2-acetamido-2-deoxy-alpha-D-glucopyranoside + H2O = 1D-myo-inositol 2-amino-2-deoxy-alpha-D-glucopyranoside + acetate. Catalyzes the deacetylation of 1D-myo-inositol 2-acetamido-2-deoxy-alpha-D-glucopyranoside (GlcNAc-Ins) in the mycothiol biosynthesis pathway. The chain is 1D-myo-inositol 2-acetamido-2-deoxy-alpha-D-glucopyranoside deacetylase from Thermobispora bispora (strain ATCC 19993 / DSM 43833 / CBS 139.67 / JCM 10125 / KCTC 9307 / NBRC 14880 / R51).